A 210-amino-acid polypeptide reads, in one-letter code: Outer-membrane lipoprotein LolB (210 aa).

Residues 1–18 form the signal peptide; that stretch reads MKKFTKILSLSTLLFLAG. The N-palmitoyl cysteine moiety is linked to residue C19. A lipid anchor (S-diacylglycerol cysteine) is attached at C19.

The protein belongs to the LolB family. In terms of assembly, monomer.

It is found in the cell outer membrane. In terms of biological role, plays a critical role in the incorporation of lipoproteins in the outer membrane after they are released by the LolA protein. This chain is Outer-membrane lipoprotein LolB, found in Actinobacillus pleuropneumoniae serotype 7 (strain AP76).